The primary structure comprises 251 residues: MSEGEPKNTHFGYKTVEADKKADLVADVFHSVAAKYDIMNDVMSFGVHRFWKRHTIEVAAARPGMKVLDLAGGTGDLTAKFSHLVGDRGQVVLADINDSMLKVGRTKLRDKGIVNNVSYVQANAEALPFPDNHFDIITIAFGLRNVTDKDAALRSMQRVLKPGGKLLVLEFSTPKHELMRKVYDMYSFKVLPKMGALITKDADSYEYLAESIRMHPDQETLKQMMVDAGFEQVDYTNMTDGVVALHRGYKF.

S-adenosyl-L-methionine-binding positions include threonine 74, aspartate 95, and 123–124 (NA).

This sequence belongs to the class I-like SAM-binding methyltransferase superfamily. MenG/UbiE family.

It catalyses the reaction a 2-demethylmenaquinol + S-adenosyl-L-methionine = a menaquinol + S-adenosyl-L-homocysteine + H(+). The catalysed reaction is a 2-methoxy-6-(all-trans-polyprenyl)benzene-1,4-diol + S-adenosyl-L-methionine = a 5-methoxy-2-methyl-3-(all-trans-polyprenyl)benzene-1,4-diol + S-adenosyl-L-homocysteine + H(+). The protein operates within quinol/quinone metabolism; menaquinone biosynthesis; menaquinol from 1,4-dihydroxy-2-naphthoate: step 2/2. It functions in the pathway cofactor biosynthesis; ubiquinone biosynthesis. Methyltransferase required for the conversion of demethylmenaquinol (DMKH2) to menaquinol (MKH2) and the conversion of 2-polyprenyl-6-methoxy-1,4-benzoquinol (DDMQH2) to 2-polyprenyl-3-methyl-6-methoxy-1,4-benzoquinol (DMQH2). The polypeptide is Ubiquinone/menaquinone biosynthesis C-methyltransferase UbiE (Shewanella frigidimarina (strain NCIMB 400)).